The sequence spans 207 residues: Holliday junction branch migration complex subunit RuvA (207 aa).

The domain I stretch occupies residues Met1–Ile64. The segment at Asp65–Glu143 is domain II. Residues Phe144 to Ser152 form a flexible linker region. The domain III stretch occupies residues Ala153 to Lys207.

Belongs to the RuvA family. Homotetramer. Forms an RuvA(8)-RuvB(12)-Holliday junction (HJ) complex. HJ DNA is sandwiched between 2 RuvA tetramers; dsDNA enters through RuvA and exits via RuvB. An RuvB hexamer assembles on each DNA strand where it exits the tetramer. Each RuvB hexamer is contacted by two RuvA subunits (via domain III) on 2 adjacent RuvB subunits; this complex drives branch migration. In the full resolvosome a probable DNA-RuvA(4)-RuvB(12)-RuvC(2) complex forms which resolves the HJ.

The protein resides in the cytoplasm. The RuvA-RuvB-RuvC complex processes Holliday junction (HJ) DNA during genetic recombination and DNA repair, while the RuvA-RuvB complex plays an important role in the rescue of blocked DNA replication forks via replication fork reversal (RFR). RuvA specifically binds to HJ cruciform DNA, conferring on it an open structure. The RuvB hexamer acts as an ATP-dependent pump, pulling dsDNA into and through the RuvAB complex. HJ branch migration allows RuvC to scan DNA until it finds its consensus sequence, where it cleaves and resolves the cruciform DNA. In Psychrobacter arcticus (strain DSM 17307 / VKM B-2377 / 273-4), this protein is Holliday junction branch migration complex subunit RuvA.